The following is a 125-amino-acid chain: Large ribosomal subunit protein eL22 (125 aa).

Belongs to the eukaryotic ribosomal protein eL22 family. As to quaternary structure, component of the large ribosomal subunit.

It localises to the cytoplasm. In terms of biological role, component of the large ribosomal subunit. The ribosome is a large ribonucleoprotein complex responsible for the synthesis of proteins in the cell. This is Large ribosomal subunit protein eL22 (rpl22) from Gadus morhua (Atlantic cod).